The sequence spans 374 residues: Putative heme chaperone HemW-like protein (374 aa).

The Radical SAM core domain maps to 1-231 (MKLLGLYINI…EKLLKKSGYK (231 aa)).

It belongs to the anaerobic coproporphyrinogen-III oxidase family. HemW subfamily.

Its subcellular location is the cytoplasm. Might be a heme chaperone; in E.coli heme binds independently of binding to [4Fe-4S] or S-adenosyl-L-methionine. The sequence is that of Putative heme chaperone HemW-like protein from Buchnera aphidicola subsp. Baizongia pistaciae (strain Bp).